Consider the following 279-residue polypeptide: Tryptophan synthase alpha chain (279 aa).

Catalysis depends on proton acceptor residues E50 and D61.

Belongs to the TrpA family. In terms of assembly, tetramer of two alpha and two beta chains.

The catalysed reaction is (1S,2R)-1-C-(indol-3-yl)glycerol 3-phosphate + L-serine = D-glyceraldehyde 3-phosphate + L-tryptophan + H2O. It participates in amino-acid biosynthesis; L-tryptophan biosynthesis; L-tryptophan from chorismate: step 5/5. In terms of biological role, the alpha subunit is responsible for the aldol cleavage of indoleglycerol phosphate to indole and glyceraldehyde 3-phosphate. In Brucella suis (strain ATCC 23445 / NCTC 10510), this protein is Tryptophan synthase alpha chain.